The sequence spans 393 residues: UPF0496 protein At2g18630 (393 aa).

The segment at 1-20 is disordered; sequence MMGGKSSKSKKNVEFGSPST. Positions 149–222 form a coiled coil; that stretch reads VNQFEEENED…RLRNIKTWRR (74 aa). The next 2 membrane-spanning stretches (helical) occupy residues 226 to 246 and 249 to 269; these read MVFVTAFVSVLIFSVVAAAVA and PVVAAIAGALAVPVGSVGKWC. Residues 299–356 are a coiled coil; that stretch reads KEMDNISILVRKVEVEIESLLKKAEFAITEEKEVRLAIDEIKKKLDVFTETIEELGEH.

The protein belongs to the UPF0496 family.

It localises to the membrane. In Arabidopsis thaliana (Mouse-ear cress), this protein is UPF0496 protein At2g18630.